Reading from the N-terminus, the 88-residue chain is Elongation factor 1-beta (88 aa).

This sequence belongs to the EF-1-beta/EF-1-delta family.

Its function is as follows. Promotes the exchange of GDP for GTP in EF-1-alpha/GDP, thus allowing the regeneration of EF-1-alpha/GTP that could then be used to form the ternary complex EF-1-alpha/GTP/AAtRNA. This chain is Elongation factor 1-beta, found in Halobacterium salinarum (strain ATCC 29341 / DSM 671 / R1).